A 519-amino-acid chain; its full sequence is T-complex protein 11-like protein 2 (519 aa).

The interval 1–30 is disordered; sequence MPFNGEKQCVGEDQPSDSDSSRFSESMASL. S16 is modified (phosphoserine). The span at 17 to 29 shows a compositional bias: low complexity; that stretch reads DSDSSRFSESMAS.

Belongs to the TCP11 family. In terms of assembly, interacts with FMNL2; this interaction promotes muscle-derived satellite cell (MDSC) migration and differentiation.

It is found in the cytoplasm. Its subcellular location is the cytoskeleton. Promotes the migration of muscle-derived satellite cells (MDSCs) during differentiation throught interaction with FMNL2 and therefore may participate in microfilament assembly. The polypeptide is T-complex protein 11-like protein 2 (Homo sapiens (Human)).